The chain runs to 145 residues: Small ribosomal subunit protein uS12 (145 aa).

The protein belongs to the universal ribosomal protein uS12 family. In terms of assembly, part of the 30S ribosomal subunit.

Functionally, with S4 and S5 plays an important role in translational accuracy. Located at the interface of the 30S and 50S subunits. The sequence is that of Small ribosomal subunit protein uS12 from Cenarchaeum symbiosum (strain A).